A 256-amino-acid chain; its full sequence is 5'-nucleotidase YutF (256 aa).

Belongs to the HAD-like hydrolase superfamily. NagD family. Homodimer. Mg(2+) serves as cofactor.

It localises to the cytoplasm. It carries out the reaction a ribonucleoside 5'-phosphate + H2O = a ribonucleoside + phosphate. The enzyme catalyses XMP + H2O = xanthosine + phosphate. Functionally, catalyzes the hydrolysis of various purine and pyrimidine 5'-nucleotides, showing preference for 5'-nucleoside monophosphates and exhibiting the highest catalytic activity toward 5'-XMP. Also shows a relatively high phosphohydrolase activity toward the nucleotide precursors ribose-5-phosphate (R5P) and 5-phosphoribosyl-1-pyrophosphate (PRPP), and toward the non-natural substrate p-nitrophenyl phosphate (pNPP). The polypeptide is 5'-nucleotidase YutF (yutF) (Bacillus subtilis (strain 168)).